The following is a 118-amino-acid chain: Ribonuclease P protein component (118 aa).

It belongs to the RnpA family. As to quaternary structure, consists of a catalytic RNA component (M1 or rnpB) and a protein subunit.

It carries out the reaction Endonucleolytic cleavage of RNA, removing 5'-extranucleotides from tRNA precursor.. RNaseP catalyzes the removal of the 5'-leader sequence from pre-tRNA to produce the mature 5'-terminus. It can also cleave other RNA substrates such as 4.5S RNA. The protein component plays an auxiliary but essential role in vivo by binding to the 5'-leader sequence and broadening the substrate specificity of the ribozyme. The protein is Ribonuclease P protein component of Shewanella oneidensis (strain ATCC 700550 / JCM 31522 / CIP 106686 / LMG 19005 / NCIMB 14063 / MR-1).